Here is a 448-residue protein sequence, read N- to C-terminus: Tumor necrosis factor receptor superfamily member EDAR (448 aa).

The signal sequence occupies residues 1-26; sequence MAHVGDCTQTPWLPVLVVSLMCSARA. Topologically, residues 27–187 are extracellular; the sequence is EYSNCGENEY…LSGQGHLATA (161 aa). TNFR-Cys repeat units follow at residues 30-71, 73-113, and 115-148; these read NCGE…DYGC, PCPA…DAEC, and PCLPGYYMLENRPRNIYGMVCYSCLLAPPNTKEC. 6 disulfide bridges follow: C31/C44, C47/C60, C50/C71, C74/C87, C93/C113, and C135/C148. N-linked (GlcNAc...) asparagine glycosylation is present at N38. A helical membrane pass occupies residues 188–208; it reads LIIAMSTIFIMAIAIVLIIMF. The Cytoplasmic segment spans residues 209–448; sequence YILKTKPSAP…PPASQPHAAS (240 aa). The interval 220–297 is disordered; it reads CCTSHPGKSV…EEPAPDKQGS (78 aa). Residues 233–243 show a composition bias toward basic and acidic residues; sequence VSKDEEKKEAP. Positions 271–283 are enriched in polar residues; the sequence is DASSENEQLLSRS. One can recognise a Death domain in the interval 358–431; sequence RMLSSTYNSE…DAVESLCADI (74 aa).

As to quaternary structure, binds to EDARADD. Associates with TRAF1, TRAF2, TRAF3 and NIK. Detected in fetal kidney, lung, skin and cultured neonatal epidermal keratinocytes. Not detected in lymphoblast and fibroblast cell lines.

It is found in the membrane. In terms of biological role, receptor for EDA isoform A1, but not for EDA isoform A2. Mediates the activation of NF-kappa-B and JNK. May promote caspase-independent cell death. The chain is Tumor necrosis factor receptor superfamily member EDAR (EDAR) from Homo sapiens (Human).